Here is a 202-residue protein sequence, read N- to C-terminus: uncharacterized protein (202 aa).

Positions 164–202 are disordered; sequence DTDSEQESDQESDQDSDQESEESDQESDQDSDQDSEGSE. Residues 165 to 202 are compositionally biased toward acidic residues; the sequence is TDSEQESDQESDQDSDQESEESDQESDQDSDQDSEGSE.

This is an uncharacterized protein from Acanthamoeba polyphaga mimivirus (APMV).